Here is a 324-residue protein sequence, read N- to C-terminus: Methyltransferase pytC (324 aa).

The tract at residues 1 to 28 is disordered; that stretch reads MTVRTAAEPPNRIEVDMDAPSLDTDSSC.

This sequence belongs to the methyltransferase superfamily. LaeA methyltransferase family.

It participates in secondary metabolite biosynthesis. In terms of biological role, methyltransferase; part of the gene cluster that mediates the biosynthesis of pyranterreones, a family of antioxidative compounds. The first step of pyranonigrins biosynthesis is performed by the hybrid PKS-NRPS synthetase pytA that condenses 4 malonyl-CoA units ato the acetyl starter unit by the modular PKS of pytA. The acyl chain is then connected to an L-serine through the amide bond by the modular NRPS of pytA. A tetramic acid is formed and released from the PKS-NRPS pytA to give pyranterreone 5 with the help of the thioesterase pytI. Pyranterreone 5 could be methylated by pytC to afford pyranterreone 6. Both pyranterreones 5 and 6 are subsequently oxidized by the FAD-linked oxidoreductase pytB and the cytochrome P450 monooxygenase pytD to form the fused gamma-pyrone core, resulting in pyranterreones 7 and 11, respectively. The hydroxy group at C-8 of pyranterreones 7 and 11 are dehydrated by the aspartyl protease pytH to form a delta-7 double bond to give pyranterreones 3 and 1, 2 accordingly. The exo-methylene of pyranterreone 3 could be reduced into a pendant methyl by reductase pytE to provide pyranterreone 4, also known as cordylactam. Pyranterreone 4 can be reconverted to pyranterreone 3 through pytB-catalyzed dehydrogenation or further oxidized to pyranterreones 9 and 10. In Aspergillus terreus, this protein is Methyltransferase pytC.